Consider the following 138-residue polypeptide: Acidic phospholipase A2 BmooPLA2 (138 aa).

Positions 1-16 (MRTLWIVAVLLLGVEG) are cleaved as a signal peptide. 7 cysteine pairs are disulfide-bonded: Cys-42–Cys-131, Cys-44–Cys-60, Cys-59–Cys-111, Cys-65–Cys-138, Cys-66–Cys-104, Cys-73–Cys-97, and Cys-91–Cys-102. Residues Tyr-43, Gly-45, and Gly-47 each coordinate Ca(2+). His-63 is an active-site residue. Residue Asp-64 participates in Ca(2+) binding. Residue Asp-105 is part of the active site.

This sequence belongs to the phospholipase A2 family. Group II subfamily. D49 sub-subfamily. Requires Ca(2+) as cofactor. In terms of tissue distribution, expressed by the venom gland.

It localises to the secreted. The catalysed reaction is a 1,2-diacyl-sn-glycero-3-phosphocholine + H2O = a 1-acyl-sn-glycero-3-phosphocholine + a fatty acid + H(+). Functionally, snake venom phospholipase A2 (PLA2) that inhibits ADP- and collagen-induced platelet aggregation, has edema-inducing, anti-coagulant activity, antibacterial activity, and cytotoxic activity. In vivo, has a hypotensive effect. PLA2 catalyzes the calcium-dependent hydrolysis of the 2-acyl groups in 3-sn-phosphoglycerides. In Bothrops moojeni (Lance-headed viper), this protein is Acidic phospholipase A2 BmooPLA2.